A 98-amino-acid polypeptide reads, in one-letter code: MSVYKYYDLIRKPIITEKTTSISEQNKYTFYVNKFAKKLSLKRAIEAIFKVKVKKVNILNIKGKKKRFKGIIGTQINRKKAIVTLEKDHNIDYAGGIK.

It belongs to the universal ribosomal protein uL23 family. Part of the 50S ribosomal subunit. Contacts protein L29, and trigger factor when it is bound to the ribosome.

In terms of biological role, one of the early assembly proteins it binds 23S rRNA. One of the proteins that surrounds the polypeptide exit tunnel on the outside of the ribosome. Forms the main docking site for trigger factor binding to the ribosome. The polypeptide is Large ribosomal subunit protein uL23 (Rickettsia prowazekii (strain Madrid E)).